Here is a 507-residue protein sequence, read N- to C-terminus: Type II methyltransferase M.PstI (507 aa).

This sequence belongs to the N(4)/N(6)-methyltransferase family. In terms of assembly, monomer.

The catalysed reaction is a 2'-deoxyadenosine in DNA + S-adenosyl-L-methionine = an N(6)-methyl-2'-deoxyadenosine in DNA + S-adenosyl-L-homocysteine + H(+). Functionally, a gamma subtype methylase that recognizes the double-stranded sequence 5'-CTGCAG-3', methylates A-5 on both strands, and protects the DNA from cleavage by the PstI endonuclease. The sequence is that of Type II methyltransferase M.PstI (pstIM) from Providencia stuartii.